The following is a 308-amino-acid chain: Protein translocase subunit SecF (308 aa).

A run of 6 helical transmembrane segments spans residues 23–42 (VSYS…IGIY), 140–160 (IEAG…YIGV), 164–184 (WYFG…ALGF), 194–214 (LSTI…SVVI), 246–266 (ILTV…GGKA), and 272–292 (VLVF…SAPI).

Belongs to the SecD/SecF family. SecF subfamily. Forms a complex with SecD. Part of the essential Sec protein translocation apparatus which comprises SecA, SecYEG and auxiliary proteins SecDF-YajC and YidC.

It localises to the cell inner membrane. Part of the Sec protein translocase complex. Interacts with the SecYEG preprotein conducting channel. SecDF uses the proton motive force (PMF) to complete protein translocation after the ATP-dependent function of SecA. The chain is Protein translocase subunit SecF from Rickettsia typhi (strain ATCC VR-144 / Wilmington).